Reading from the N-terminus, the 445-residue chain is Phosphoglucosamine mutase (445 aa).

Serine 102 serves as the catalytic Phosphoserine intermediate. Serine 102, aspartate 240, aspartate 242, and aspartate 244 together coordinate Mg(2+). Serine 102 is modified (phosphoserine).

It belongs to the phosphohexose mutase family. Mg(2+) serves as cofactor. In terms of processing, activated by phosphorylation.

It carries out the reaction alpha-D-glucosamine 1-phosphate = D-glucosamine 6-phosphate. In terms of biological role, catalyzes the conversion of glucosamine-6-phosphate to glucosamine-1-phosphate. In Mycobacterium marinum (strain ATCC BAA-535 / M), this protein is Phosphoglucosamine mutase.